We begin with the raw amino-acid sequence, 104 residues long: Replication restart protein PriB (104 aa).

The SSB domain maps to 1 to 101 (MTNRLELSGI…LHAEQIELID (101 aa)).

It belongs to the PriB family. In terms of assembly, homodimer. Interacts with DnaT. Interacts with PriA. Component of the replication restart primosome. Primosome assembly occurs via a 'hand-off' mechanism. PriA binds to replication forks, subsequently PriB then DnaT bind; DnaT then displaces ssDNA to generate the helicase loading substrate.

Functionally, involved in the restart of stalled replication forks, which reloads the replicative helicase on sites far from the origin of replication; the PriA-PriB pathway is the major replication restart pathway. During primosome assembly it facilitates complex formation between PriA and DnaT on DNA; stabilizes PriA on DNA. Stimulates the DNA unwinding activity of PriA helicase. Its function is as follows. Binds single-stranded (ss)DNA at the primosome assembly site (PAS). One study finds it binds 15 nucleotide (nt) ssDNA. Another study finds the minimal ssDNA length for binding to PriB is 25 nt; prefers dT(30) over dA(30). Also binds 22 nt dsDNA. The protein is Replication restart protein PriB of Klebsiella pneumoniae subsp. pneumoniae (strain ATCC 700721 / MGH 78578).